A 118-amino-acid chain; its full sequence is uncharacterized protein (118 aa).

The disordered stretch occupies residues 1 to 118 (MASARGAKQS…AARQNEKTAR (118 aa)). The segment covering 13–28 (RVGTTRYTETSTVRVE) has biased composition (low complexity). Over residues 29-49 (TSSHRVETSSRRVETSQRRSE) the composition is skewed to basic and acidic residues.

This is an uncharacterized protein from Homo sapiens (Human).